The sequence spans 315 residues: Borealin (315 aa).

Disordered regions lie at residues isoleucine 103 to glycine 126 and leucine 138 to methionine 226. Threonine 146 carries the phosphothreonine modification. Serine 152 is modified (phosphoserine). The span at alanine 153 to arginine 162 shows a compositional bias: basic residues. Serine 163 is modified (phosphoserine). Over residues serine 178–asparagine 188 the composition is skewed to low complexity. Position 205 is a phosphoserine (serine 205). The residue at position 209 (threonine 209) is a Phosphothreonine. Phosphoserine is present on residues serine 218, serine 220, and serine 244.

It belongs to the borealin family. In terms of assembly, component of the CPC complex. As to expression, ubiquitously expressed in the early embryo. Expression is restricted to the ventral nerve cord and brain during later embryonic stages.

It is found in the nucleus. The protein localises to the chromosome. It localises to the centromere. The protein resides in the cytoplasm. Its subcellular location is the cytoskeleton. It is found in the spindle. Its function is as follows. Component of the chromosomal passenger complex (CPC), a complex that acts as a key regulator of embryonic mitosis. The CPC complex has essential functions at the centromere for ensuring sister chromatid cohesion, recruitment of the CPC to kinetochores, and chromosome alignment and segregation. There is no function in meiotic histone phosphorylation or spindle formation. In Drosophila melanogaster (Fruit fly), this protein is Borealin (borr).